The primary structure comprises 464 residues: Fumarate hydratase class II (464 aa).

Substrate is bound by residues 98–100 (SGT), 129–132 (HPND), 139–141 (SSN), and T187. H188 (proton donor/acceptor) is an active-site residue. S318 is a catalytic residue. Substrate is bound by residues S319 and 324–326 (KVN).

This sequence belongs to the class-II fumarase/aspartase family. Fumarase subfamily. As to quaternary structure, homotetramer.

It localises to the cytoplasm. It carries out the reaction (S)-malate = fumarate + H2O. It functions in the pathway carbohydrate metabolism; tricarboxylic acid cycle; (S)-malate from fumarate: step 1/1. In terms of biological role, involved in the TCA cycle. Catalyzes the stereospecific interconversion of fumarate to L-malate. The sequence is that of Fumarate hydratase class II from Wigglesworthia glossinidia brevipalpis.